The chain runs to 211 residues: uncharacterized protein (211 aa).

This is an uncharacterized protein from Archaeoglobus fulgidus (strain ATCC 49558 / DSM 4304 / JCM 9628 / NBRC 100126 / VC-16).